The primary structure comprises 361 residues: Elongator complex protein 4 (361 aa).

Disordered regions lie at residues 93–124 (QLPG…PQQE) and 338–361 (DDEQ…SLDF). 2 stretches are compositionally biased toward polar residues: residues 104–121 (NENS…SKNP) and 346–355 (ISNTNPQKQP).

This sequence belongs to the ELP4 family. Component of the elongator complex.

Its subcellular location is the cytoplasm. The protein resides in the nucleus. The protein operates within tRNA modification; 5-methoxycarbonylmethyl-2-thiouridine-tRNA biosynthesis. Its function is as follows. Component of the elongator complex, a multiprotein complex which is required for multiple tRNA modifications, including mcm5U (5-methoxycarbonylmethyl uridine), mcm5s2U (5-methoxycarbonylmethyl-2-thiouridine), and ncm5U (5-carbamoylmethyl uridine). The elongator complex catalyzes formation of carboxymethyluridine in the wobble base at position 34 in tRNAs. This chain is Elongator complex protein 4, found in Schizosaccharomyces pombe (strain 972 / ATCC 24843) (Fission yeast).